The sequence spans 263 residues: Mediator of RNA polymerase II transcription subunit 6 (263 aa).

Residues 159–205 are disordered; the sequence is NSIHGSSSKPSQSSAVSKPSSTNTGTNATTTPITLTTPSGATVPSTV. Over residues 164-200 the composition is skewed to low complexity; it reads SSSKPSQSSAVSKPSSTNTGTNATTTPITLTTPSGAT.

The protein belongs to the Mediator complex subunit 6 family. Component of the Mediator complex.

The protein resides in the nucleus. Its function is as follows. Component of the Mediator complex, a coactivator involved in the regulated transcription of nearly all RNA polymerase II-dependent genes. Mediator functions as a bridge to convey information from gene-specific regulatory proteins to the basal RNA polymerase II transcription machinery. Mediator is recruited to promoters by direct interactions with regulatory proteins and serves as a scaffold for the assembly of a functional preinitiation complex with RNA polymerase II and the general transcription factors. The protein is Mediator of RNA polymerase II transcription subunit 6 (MED6) of Candida albicans (strain SC5314 / ATCC MYA-2876) (Yeast).